Consider the following 95-residue polypeptide: Large ribosomal subunit protein eL37z (95 aa).

Zn(2+)-binding residues include Cys-19, Cys-22, Cys-34, and Cys-37. The C4-type zinc finger occupies 19–37 (CVRCGRRSFHIQKSRCSAC).

The protein belongs to the eukaryotic ribosomal protein eL37 family. It depends on Zn(2+) as a cofactor.

Binds to the 23S rRNA. This Arabidopsis thaliana (Mouse-ear cress) protein is Large ribosomal subunit protein eL37z (RPL37A).